Consider the following 23-residue polypeptide: Potassium channel toxin alpha-KTx 13.3 (23 aa).

3 disulfides stabilise this stretch: C2–C15, C5–C20, and C9–C22. Positions 13–20 (GKCINGRC) are interaction with Ca(2+)-activated K(+) channels. Position 23 is a tyrosine amide (Y23).

In terms of tissue distribution, expressed by the venom gland.

It is found in the secreted. In terms of biological role, reversibly blocks Shaker B potassium channels, with a dissociation constant of 200 nM. The polypeptide is Potassium channel toxin alpha-KTx 13.3 (Tityus pachyurus (Colombian scorpion)).